The following is a 277-amino-acid chain: Transcription factor WRKY19 (277 aa).

Residues 100–168 (QDTASLDDGL…YLGDHTCGQA (69 aa)) constitute a DNA-binding region (WRKY).

It belongs to the WRKY group III family.

The protein localises to the nucleus. Functionally, may play a role in defense responses. This chain is Transcription factor WRKY19, found in Oryza sativa subsp. japonica (Rice).